Reading from the N-terminus, the 190-residue chain is Large ribosomal subunit protein uL5 (190 aa).

The protein belongs to the universal ribosomal protein uL5 family. Part of the 50S ribosomal subunit; part of the 5S rRNA/L5/L18/L25 subcomplex. Contacts the 5S rRNA and the P site tRNA. Forms a bridge to the 30S subunit in the 70S ribosome.

Functionally, this is one of the proteins that bind and probably mediate the attachment of the 5S RNA into the large ribosomal subunit, where it forms part of the central protuberance. In the 70S ribosome it contacts protein S13 of the 30S subunit (bridge B1b), connecting the 2 subunits; this bridge is implicated in subunit movement. Contacts the P site tRNA; the 5S rRNA and some of its associated proteins might help stabilize positioning of ribosome-bound tRNAs. This chain is Large ribosomal subunit protein uL5, found in Blochmanniella floridana.